Here is a 956-residue protein sequence, read N- to C-terminus: Netrin receptor UNC5D (956 aa).

An N-terminal signal peptide occupies residues 1 to 30; it reads MGTGAADGSRGARRWLPWLGLFFWAAGAAA. Over 31–382 the chain is Extracellular; that stretch reads ARGADGSEIL…SRRGIENASD (352 aa). The region spanning 52 to 149 is the Ig-like domain; it reads PHFIEEPEDA…LGTSKSRKAS (98 aa). 9 cysteine pairs are disulfide-bonded: cysteine 73-cysteine 134, cysteine 85-cysteine 132, cysteine 178-cysteine 229, cysteine 262-cysteine 299, cysteine 266-cysteine 303, cysteine 277-cysteine 289, cysteine 318-cysteine 352, cysteine 322-cysteine 357, and cysteine 330-cysteine 342. The tract at residues 89–91 is important for interaction with FLRT2; it reads WVH. Residues asparagine 115 and asparagine 226 are each glycosylated (N-linked (GlcNAc...) asparagine). Residues 151-242 enclose the Ig-like C2-type domain; sequence RIAYLRKNFE…NIVAKRRSLS (92 aa). TSP type-1 domains follow at residues 250 to 304 and 306 to 358; these read NGGW…ALCP and DGSW…GLCI. 2 N-linked (GlcNAc...) asparagine glycosylation sites follow: asparagine 351 and asparagine 379. Residues 383–403 form a helical membrane-spanning segment; that stretch reads IALYSGLGAAVVAVAVLVIGV. At 404 to 956 the chain is on the cytoplasmic side; sequence TLYRRSHSDY…DFNYSRQNGL (553 aa). The ZU5 domain maps to 545–685; sequence LRTTGVFGHL…FGTYALTGEP (141 aa). The region spanning 862 to 939 is the Death domain; that stretch reads QRICATFDTP…RTHTKLSNIT (78 aa).

It belongs to the unc-5 family. Interacts (via extracellular domain) with FLRT2 and FLRT3 (via extracellular domain); the interaction is direct. Has higher affinity for FLRT2. Identified in a complex with FLRT3 and ADGRL3; does not interact with ADGRL3 by itself. In terms of processing, proteolytically cleaved by caspases during apoptosis. The cleavage does not take place when the receptor is associated with netrin ligand. Its cleavage by caspases is required to induce apoptosis. In terms of tissue distribution, detected in multipolar cells in the brain subventricular zone (at protein level). Detected in embryonic brain neocortex, especially in the subventricular zone. Detected in multipolar cells in the brain subventricular zone. Detected in brain neocortex from young pups, especially in the somatosensory cortex. Expressed in developing limb and mammary gland.

It localises to the cell membrane. Functionally, receptor for the netrin NTN4 that promotes neuronal cell survival. Plays a role in cell-cell adhesion and cell guidance. Receptor for netrin involved in cell migration. Plays a role in the regulation of neuronal cell migration in the developing brain via its interaction with FLRT2. Plays a role in axon guidance by mediating axon repulsion of neuronal growth cones in the developing nervous system upon ligand binding. May play a role in apoptosis in response to DNA damage. It also acts as a dependence receptor required for apoptosis induction when not associated with netrin ligand. Mediates cell-cell adhesion via its interaction with FLRT3 on an adjacent cell. The chain is Netrin receptor UNC5D (Unc5d) from Mus musculus (Mouse).